We begin with the raw amino-acid sequence, 57 residues long: Small ribosomal subunit protein bS21 (57 aa).

The protein belongs to the bacterial ribosomal protein bS21 family.

This Phytoplasma australiense protein is Small ribosomal subunit protein bS21.